The sequence spans 302 residues: uncharacterized protein (302 aa).

Disordered regions lie at residues 15 to 34 (RHST…RFHK), 143 to 195 (GMPL…PSHL), and 221 to 246 (GSEA…RESV). The span at 172–189 (HSDENKATGQGRENRDQP) shows a compositional bias: basic and acidic residues.

This is an uncharacterized protein from Homo sapiens (Human).